Here is a 135-residue protein sequence, read N- to C-terminus: MRNSTPSKNHFSPPSIKAQHKVAKKRAIRRSRIDLSCGCSYYIHINCRNYGFSHRGQHHCSSTQEWRLYLGGAKSPLFQDHAAPSNSSRVPDVCDPNTDNVQPRVEESTADAQMLPGSDALPLFDGDFWDDIIDF.

The short motif at 17–32 (KAQHKVAKKRAIRRSR) is the Nuclear localization signal element. The segment at 37-54 (CGCSYYIHINCRNYGFSH) is a zinc-finger region. A disordered region spans residues 82-102 (AAPSNSSRVPDVCDPNTDNVQ). Residues 120–135 (ALPLFDGDFWDDIIDF) form a transactivation region.

The protein belongs to the geminiviridae transcriptional activator protein family. Monomer. Homodimer. Homooligomer. Self-interaction correlates with nuclear localization and efficient activation of transcription. Monomers suppress local silencing by interacting with and inactivating host adenosine kinase 2 (ADK2) in the cytoplasm. Interacts with and inhibits host SNF1 kinase. Binds to ssDNA. In terms of processing, phosphorylated.

The protein localises to the host nucleus. It is found in the host cytoplasm. Strong activator of the late viral genes promoters. Enhances the expression of the capsid protein and nuclear shuttle protein. Acts as a suppressor of RNA-mediated gene silencing, also known as post-transcriptional gene silencing (PTGS), a mechanism of plant viral defense that limits the accumulation of viral RNAs. Suppresses the host RNA silencing by inhibiting adenosine kinase 2 (ADK2), a kinase involved in a general methylation pathway. Also suppresses the host basal defense by interacting with and inhibiting SNF1 kinase, a key regulator of cell metabolism implicated in innate antiviral defense. Determines pathogenicity. This chain is Transcriptional activator protein, found in Mungbean yellow mosaic virus (strain Vigna) (MYMV).